Here is a 213-residue protein sequence, read N- to C-terminus: Protein-L-isoaspartate O-methyltransferase 1 (213 aa).

Residue Ser-64 is part of the active site.

It belongs to the methyltransferase superfamily. L-isoaspartyl/D-aspartyl protein methyltransferase family.

It is found in the cytoplasm. The catalysed reaction is [protein]-L-isoaspartate + S-adenosyl-L-methionine = [protein]-L-isoaspartate alpha-methyl ester + S-adenosyl-L-homocysteine. Its function is as follows. Catalyzes the methyl esterification of L-isoaspartyl residues in peptides and proteins that result from spontaneous decomposition of normal L-aspartyl and L-asparaginyl residues. It plays a role in the repair and/or degradation of damaged proteins. This Nitrosococcus oceani (strain ATCC 19707 / BCRC 17464 / JCM 30415 / NCIMB 11848 / C-107) protein is Protein-L-isoaspartate O-methyltransferase 1.